The primary structure comprises 1026 residues: Probable DNA-directed RNA polymerase II subunit RPB1 homolog (1026 aa).

Zn(2+) contacts are provided by Cys62, Cys65, Cys72, His75, Cys102, Cys105, and Cys142. Mg(2+) is bound by residues Asp588, Asp590, and Asp592.

The protein belongs to the RNA polymerase beta' chain family.

It carries out the reaction RNA(n) + a ribonucleoside 5'-triphosphate = RNA(n+1) + diphosphate. Functionally, component of the DNA-dependent RNA polymerase that catalyzes the transcription of DNA into RNA using the four ribonucleoside triphosphates as substrates. Largest and catalytic component of RNA polymerase II which synthesizes mRNA precursors and many functional non-coding RNAs. Forms the polymerase active center together with the second largest subunit. The protein is Probable DNA-directed RNA polymerase II subunit RPB1 homolog of Acheta domesticus (House cricket).